Here is a 404-residue protein sequence, read N- to C-terminus: Imidazolonepropionase (404 aa).

Fe(3+)-binding residues include H73 and H75. Residues H73 and H75 each coordinate Zn(2+). The 4-imidazolone-5-propanoate site is built by R82, Y145, and H178. An N-formimidoyl-L-glutamate-binding site is contributed by Y145. Position 243 (H243) interacts with Fe(3+). Position 243 (H243) interacts with Zn(2+). 4-imidazolone-5-propanoate is bound at residue Q246. D318 provides a ligand contact to Fe(3+). D318 is a binding site for Zn(2+). Residues N320 and G322 each contribute to the N-formimidoyl-L-glutamate site. S323 is a 4-imidazolone-5-propanoate binding site.

It belongs to the metallo-dependent hydrolases superfamily. HutI family. The cofactor is Zn(2+). It depends on Fe(3+) as a cofactor.

It localises to the cytoplasm. The catalysed reaction is 4-imidazolone-5-propanoate + H2O = N-formimidoyl-L-glutamate. Its pathway is amino-acid degradation; L-histidine degradation into L-glutamate; N-formimidoyl-L-glutamate from L-histidine: step 3/3. Functionally, catalyzes the hydrolytic cleavage of the carbon-nitrogen bond in imidazolone-5-propanoate to yield N-formimidoyl-L-glutamate. It is the third step in the universal histidine degradation pathway. In Bradyrhizobium diazoefficiens (strain JCM 10833 / BCRC 13528 / IAM 13628 / NBRC 14792 / USDA 110), this protein is Imidazolonepropionase.